The primary structure comprises 249 residues: Acetate transporter protein patA (249 aa).

6 helical membrane passes run 42–62 (IGSPTALGMGAFAIAFTTLSM), 71–91 (AITNAYIGNCFFTAGMGLVLV), 106–126 (VFGGFGLFNLAFGAINAPAFG), 141–161 (AIGYFLLVWGIFVLFFTVAAM), 169–189 (GMLGTSQITYTLLAASYFSFA), and 202–222 (AAGAFGFVSGLFAWYTVGHLM).

It belongs to the acetate uptake transporter (AceTr) (TC 2.A.96) family.

The protein localises to the endoplasmic reticulum membrane. It participates in mycotoxin biosynthesis; patulin biosynthesis. Functionally, acetate transporter protein; part of the gene cluster that mediates the biosynthesis of patulin, an acetate-derived tetraketide mycotoxin produced by several fungal species that shows antimicrobial properties against several bacteria. May be involved in the uptake of acetate, a substrate for the synthesis of 6-methylsalicylic acid by the polyketide synthase patK. This is Acetate transporter protein patA from Penicillium expansum (Blue mold rot fungus).